We begin with the raw amino-acid sequence, 458 residues long: Phosphoglucosamine mutase (458 aa).

The active-site Phosphoserine intermediate is Ser106. Mg(2+) contacts are provided by Ser106, Asp247, Asp249, and Asp251. Ser106 carries the phosphoserine modification.

Belongs to the phosphohexose mutase family. Mg(2+) is required as a cofactor. In terms of processing, activated by phosphorylation.

The enzyme catalyses alpha-D-glucosamine 1-phosphate = D-glucosamine 6-phosphate. Catalyzes the conversion of glucosamine-6-phosphate to glucosamine-1-phosphate. The chain is Phosphoglucosamine mutase from Chlamydia abortus (strain DSM 27085 / S26/3) (Chlamydophila abortus).